Here is an 859-residue protein sequence, read N- to C-terminus: Bifunctional levopimaradiene synthase, chloroplastic (859 aa).

The transit peptide at 1–70 (MALLSSSLSS…IACVGEDSLS (70 aa)) directs the protein to the chloroplast. Lysine 259 provides a ligand contact to substrate. Mg(2+) contacts are provided by aspartate 392 and aspartate 394. A DXDD motif motif is present at residues 392–395 (DIDD). A substrate-binding site is contributed by lysine 479. The Mg(2+) site is built by aspartate 611, aspartate 615, asparagine 755, threonine 759, and glutamate 763. The short motif at 611–615 (DDLYD) is the DDXXD motif element.

It belongs to the terpene synthase family. Tpsd subfamily. It depends on Mg(2+) as a cofactor.

Its subcellular location is the plastid. It is found in the chloroplast. The catalysed reaction is (2E,6E,10E)-geranylgeranyl diphosphate = (+)-copalyl diphosphate. It catalyses the reaction (+)-copalyl diphosphate = abieta-8(14),12-diene + diphosphate. It functions in the pathway terpene metabolism; oleoresin biosynthesis. Its function is as follows. Involved in defensive oleoresin formation in conifers in response to insect attack or other injury. Involved in diterpene (C20) olefins biosynthesis. Bifunctional enzyme that catalyzes two sequential cyclizations of geranylgeranyl diphosphate (GGPP) to levopimaradiene. Levopimaradiene is the major products of the enzyme followed by abietadiene, neoabietadiene and palustradiene. In Picea abies (Norway spruce), this protein is Bifunctional levopimaradiene synthase, chloroplastic (TPS-LAS).